We begin with the raw amino-acid sequence, 372 residues long: Histidinol-phosphate aminotransferase (372 aa).

Lys-229 carries the N6-(pyridoxal phosphate)lysine modification.

This sequence belongs to the class-II pyridoxal-phosphate-dependent aminotransferase family. Histidinol-phosphate aminotransferase subfamily. Homodimer. Pyridoxal 5'-phosphate serves as cofactor.

It carries out the reaction L-histidinol phosphate + 2-oxoglutarate = 3-(imidazol-4-yl)-2-oxopropyl phosphate + L-glutamate. It functions in the pathway amino-acid biosynthesis; L-histidine biosynthesis; L-histidine from 5-phospho-alpha-D-ribose 1-diphosphate: step 7/9. The protein is Histidinol-phosphate aminotransferase of Bdellovibrio bacteriovorus (strain ATCC 15356 / DSM 50701 / NCIMB 9529 / HD100).